The primary structure comprises 92 residues: SPbeta prophage-derived uncharacterized protein YopY (92 aa).

This chain is SPbeta prophage-derived uncharacterized protein YopY (yopY), found in Bacillus subtilis (strain 168).